Consider the following 180-residue polypeptide: Meiotic recombination protein rec15 (180 aa).

In terms of assembly, homomer. Interacts (via C-terminus) with hop1 (via C-terminus); the interaction is direct. Interacts (via C-terminus) with rec10; the interaction is direct. Interacts with mde2; the interaction is direct.

The protein localises to the nucleus. Its subcellular location is the chromosome. Functionally, required during the early stages of meiosis for meiotic recombination. The sequence is that of Meiotic recombination protein rec15 from Schizosaccharomyces pombe (strain 972 / ATCC 24843) (Fission yeast).